A 415-amino-acid polypeptide reads, in one-letter code: Putative F-box protein At5g40050 (415 aa).

The F-box domain occupies 13–59; it reads IDSISPLPDELLSHILSFLPTKRAASTSILSKRWRTLFPLMNHLCAS.

The protein is Putative F-box protein At5g40050 of Arabidopsis thaliana (Mouse-ear cress).